Here is a 367-residue protein sequence, read N- to C-terminus: Pyrimidine monooxygenase RutA (367 aa).

FMN contacts are provided by residues 49 to 50 (IK), Asn-115, Glu-124, 140 to 141 (RY), and Ser-190.

This sequence belongs to the NtaA/SnaA/DszA monooxygenase family. RutA subfamily.

It catalyses the reaction uracil + FMNH2 + NADH + O2 = (Z)-3-ureidoacrylate + FMN + NAD(+) + H2O + H(+). The enzyme catalyses thymine + FMNH2 + NADH + O2 = (Z)-2-methylureidoacrylate + FMN + NAD(+) + H2O + H(+). Its function is as follows. Catalyzes the pyrimidine ring opening between N-3 and C-4 by an unusual flavin hydroperoxide-catalyzed mechanism, adding oxygen atoms in the process to yield ureidoacrylate peracid, that immediately reacts with FMN forming ureidoacrylate and FMN-N(5)-oxide. The FMN-N(5)-oxide reacts spontaneously with NADH to produce FMN. Requires the flavin reductase RutF to regenerate FMN in vivo. This chain is Pyrimidine monooxygenase RutA, found in Yersinia enterocolitica serotype O:8 / biotype 1B (strain NCTC 13174 / 8081).